We begin with the raw amino-acid sequence, 327 residues long: Phenylalanine--tRNA ligase alpha subunit (327 aa).

A Mg(2+)-binding site is contributed by Glu-252.

This sequence belongs to the class-II aminoacyl-tRNA synthetase family. Phe-tRNA synthetase alpha subunit type 1 subfamily. As to quaternary structure, tetramer of two alpha and two beta subunits. Requires Mg(2+) as cofactor.

It localises to the cytoplasm. It carries out the reaction tRNA(Phe) + L-phenylalanine + ATP = L-phenylalanyl-tRNA(Phe) + AMP + diphosphate + H(+). The protein is Phenylalanine--tRNA ligase alpha subunit of Shewanella amazonensis (strain ATCC BAA-1098 / SB2B).